The sequence spans 139 residues: Mitochondrial intermembrane space import and assembly protein 40-A (139 aa).

Intrachain disulfides connect Cys53–Cys55, Cys64–Cys97, and Cys74–Cys87. The region spanning 61–105 is the CHCH domain; that stretch reads SGPCGEQFKSAFSCFHYSQEEIKGSDCLDQFRGMQECMQKYPDLY. Short sequence motifs (cx9C motif) lie at residues 64–74 and 87–97; these read CGEQFKSAFSC and CLDQFRGMQEC. Positions 103 to 139 are disordered; the sequence is DLYPQEDDEEEAEKEKQNKEAEPSVTQSSDTKEESSS. Residues 115-124 show a composition bias toward basic and acidic residues; that stretch reads EKEKQNKEAE.

Monomer. Can form homooligomers.

The protein localises to the mitochondrion intermembrane space. Central component of a redox-sensitive mitochondrial intermembrane space import machinery which is required for the biogenesis of respiratory chain complexes. Functions as chaperone and catalyzes the formation of disulfide bonds in substrate proteins, such as COX17 or MICU1. Required for the import and folding of small cysteine-containing proteins (small Tim) in the mitochondrial intermembrane space (IMS). Precursor proteins to be imported into the IMS are translocated in their reduced form into the mitochondria. In Xenopus laevis (African clawed frog), this protein is Mitochondrial intermembrane space import and assembly protein 40-A (chchd4-a).